The following is a 335-amino-acid chain: Auxin-responsive protein IAA6 (335 aa).

Positions 51 to 55 (LKLGL) match the EAR-like (transcriptional repression) motif. Disordered regions lie at residues 81-102 (LSFF…GAKR), 143-180 (KKGC…VGWP), and 188-207 (NLAS…DNAN). Residues 217–321 (NPLVKINMDG…TAKRLRVLRS (105 aa)) enclose the PB1 domain.

Belongs to the Aux/IAA family. As to quaternary structure, homodimers and heterodimers. In terms of tissue distribution, highly expressed in roots. Expressed in shoots and flowers.

The protein resides in the nucleus. Its function is as follows. Aux/IAA proteins are short-lived transcriptional factors that function as repressors of early auxin response genes at low auxin concentrations. The protein is Auxin-responsive protein IAA6 (IAA6) of Oryza sativa subsp. japonica (Rice).